Consider the following 491-residue polypeptide: Aspartyl/glutamyl-tRNA(Asn/Gln) amidotransferase subunit B (491 aa).

This sequence belongs to the GatB/GatE family. GatB subfamily. Heterotrimer of A, B and C subunits.

The enzyme catalyses L-glutamyl-tRNA(Gln) + L-glutamine + ATP + H2O = L-glutaminyl-tRNA(Gln) + L-glutamate + ADP + phosphate + H(+). It catalyses the reaction L-aspartyl-tRNA(Asn) + L-glutamine + ATP + H2O = L-asparaginyl-tRNA(Asn) + L-glutamate + ADP + phosphate + 2 H(+). Allows the formation of correctly charged Asn-tRNA(Asn) or Gln-tRNA(Gln) through the transamidation of misacylated Asp-tRNA(Asn) or Glu-tRNA(Gln) in organisms which lack either or both of asparaginyl-tRNA or glutaminyl-tRNA synthetases. The reaction takes place in the presence of glutamine and ATP through an activated phospho-Asp-tRNA(Asn) or phospho-Glu-tRNA(Gln). This chain is Aspartyl/glutamyl-tRNA(Asn/Gln) amidotransferase subunit B, found in Prochlorococcus marinus (strain NATL2A).